The sequence spans 122 residues: Large ribosomal subunit protein bL12 (122 aa).

The protein belongs to the bacterial ribosomal protein bL12 family. In terms of assembly, homodimer. Part of the ribosomal stalk of the 50S ribosomal subunit. Forms a multimeric L10(L12)X complex, where L10 forms an elongated spine to which 2 to 4 L12 dimers bind in a sequential fashion. Binds GTP-bound translation factors.

In terms of biological role, forms part of the ribosomal stalk which helps the ribosome interact with GTP-bound translation factors. Is thus essential for accurate translation. This chain is Large ribosomal subunit protein bL12, found in Dichelobacter nodosus (strain VCS1703A).